The chain runs to 364 residues: Polygalacturonase (364 aa).

The first 21 residues, Met-1–Pro-21, serve as a signal peptide directing secretion. Residues Ser-22–Arg-27 constitute a propeptide that is removed on maturation. Cysteines 30 and 45 form a disulfide. PbH1 repeat units follow at residues Val-158 to Ser-188, Ser-189 to Ser-210, Gly-211 to Ser-231, Val-240 to Thr-261, Val-269 to Gln-291, and Thr-303 to Gly-348. The active-site Proton donor is the Asp-203. Cysteines 205 and 221 form a disulfide. His-225 is a catalytic residue. Asn-276 carries an N-linked (GlcNAc...) asparagine glycan. Cys-331 and Cys-336 are disulfide-bonded. The N-linked (GlcNAc...) asparagine glycan is linked to Asn-340. Cysteines 355 and 364 form a disulfide.

The protein belongs to the glycosyl hydrolase 28 family.

It is found in the secreted. The enzyme catalyses (1,4-alpha-D-galacturonosyl)n+m + H2O = (1,4-alpha-D-galacturonosyl)n + (1,4-alpha-D-galacturonosyl)m.. Its function is as follows. Involved in maceration and soft-rotting of plant tissue. Hydrolyzes the 1,4-alpha glycosidic bonds of de-esterified pectate in the smooth region of the plant cell wall. The chain is Polygalacturonase (PGN1) from Cochliobolus carbonum (Maize leaf spot fungus).